A 251-amino-acid chain; its full sequence is uncharacterized protein (251 aa).

A run of 4 helical transmembrane segments spans residues 56 to 76 (LAVVIAQLTIGVLGNSLTLVA), 104 to 124 (IITVGITNVILFLLFVAFLLT), 184 to 204 (HGFVYHFIAYFVLVSSLLIIV), and 208 to 228 (YLIADVITTYATSLLILANIS).

Its subcellular location is the membrane. This is an uncharacterized protein from Caenorhabditis elegans.